The primary structure comprises 271 residues: Cytosolic Fe-S cluster assembly factor NUBP2 (271 aa).

Methionine 1 is subject to N-acetylmethionine. An ATP-binding site is contributed by 22–29; sequence GKGGVGKS. Residues cysteine 196 and cysteine 199 each coordinate [4Fe-4S] cluster.

It belongs to the Mrp/NBP35 ATP-binding proteins family. NUBP2/CFD1 subfamily. In terms of assembly, heterotetramer of 2 NUBP1 and 2 NUBP2 chains. Interacts with KIFC1. Interacts with NUBP1. [4Fe-4S] cluster serves as cofactor.

It localises to the nucleus. It is found in the cytoplasm. The protein localises to the cytoskeleton. Its subcellular location is the microtubule organizing center. The protein resides in the centrosome. It localises to the cilium axoneme. It is found in the centriole. Its function is as follows. Component of the cytosolic iron-sulfur (Fe/S) protein assembly (CIA) machinery. Required for maturation of extramitochondrial Fe-S proteins. The NUBP1-NUBP2 heterotetramer forms a Fe-S scaffold complex, mediating the de novo assembly of an Fe-S cluster and its transfer to target apoproteins. Negatively regulates cilium formation and structure. The polypeptide is Cytosolic Fe-S cluster assembly factor NUBP2 (Bos taurus (Bovine)).